Consider the following 117-residue polypeptide: Large ribosomal subunit protein bL20c (117 aa).

Belongs to the bacterial ribosomal protein bL20 family.

It localises to the plastid. Its subcellular location is the chloroplast. Binds directly to 23S ribosomal RNA and is necessary for the in vitro assembly process of the 50S ribosomal subunit. It is not involved in the protein synthesizing functions of that subunit. The polypeptide is Large ribosomal subunit protein bL20c (Calycanthus floridus var. glaucus (Eastern sweetshrub)).